A 258-amino-acid polypeptide reads, in one-letter code: UPF0246 protein Pnec_1068 (258 aa).

The protein belongs to the UPF0246 family.

The chain is UPF0246 protein Pnec_1068 from Polynucleobacter necessarius subsp. necessarius (strain STIR1).